Reading from the N-terminus, the 512-residue chain is Sodium/proline symporter (512 aa).

13 helical membrane-spanning segments follow: residues 16 to 36, 54 to 74, 85 to 105, 139 to 159, 174 to 194, 200 to 220, 240 to 260, 286 to 306, 327 to 347, 381 to 401, 410 to 430, 438 to 458, and 467 to 487; these read WQTYIMIAVYFLILIVIGFYG, IGPYITALSAGASDMSGWMIM, LSAMWITIGLTLGAYINYFVV, IISGLIIVVFFTLYTHSGFVS, FGLILVAFIVIFYTFFGGYLA, FFQGVIMLIAMVMVPIVAMMN, LFKGLSFIGIISLFSWGLGYF, ISWMAVGLLGAVAVGLTGIAF, VLFHPLVGGFLLAAILAAIMS, FVMIGRLSVLVVAIVAIAIAW, LVGNAWAGFGASFSPLVLFAL, AGAVSGMVSGALVVIVWIAWI, and IFGLYEIIPGFIVSVIVTYVV.

Belongs to the sodium:solute symporter (SSF) (TC 2.A.21) family.

The protein resides in the cell membrane. It catalyses the reaction L-proline(in) + Na(+)(in) = L-proline(out) + Na(+)(out). Catalyzes the sodium-dependent uptake of extracellular L-proline. Since most S.aureus strains are L-proline auxotrophs, this transporter may aid the bacterial persistence during an infection of tissues with low proline concentrations. In Staphylococcus aureus (strain Newman), this protein is Sodium/proline symporter (putP).